The primary structure comprises 238 residues: Cysteine-rich venom protein 2 (238 aa).

The signal sequence occupies residues 1 to 19 (MIAFIVLLSLAAVLQQSSG). One can recognise an SCP domain in the interval 38 to 164 (VDKHNALRRS…STKYLYVCQY (127 aa)). Cystine bridges form between Cys-75–Cys-153, Cys-92–Cys-165, Cys-148–Cys-162, Cys-184–Cys-191, Cys-187–Cys-196, Cys-200–Cys-233, Cys-209–Cys-227, and Cys-218–Cys-231. A ShKT domain is found at 200 to 233 (CEYEDAYTNCNDLVKERKCQTEWIKSQCPATCFC).

The protein belongs to the CRISP family. Expressed by the venom gland.

It is found in the secreted. Functionally, blocks contraction of smooth muscle elicited by high potassium-induced depolarization, but does not block caffeine-stimulated contraction. May target voltage-gated calcium channels (Cav) on smooth muscle. The polypeptide is Cysteine-rich venom protein 2 (Hydrophis hardwickii (Hardwick's spine-bellied seasnake)).